A 176-amino-acid chain; its full sequence is Adenine phosphoribosyltransferase (176 aa).

It belongs to the purine/pyrimidine phosphoribosyltransferase family. In terms of assembly, homodimer.

It is found in the cytoplasm. It catalyses the reaction AMP + diphosphate = 5-phospho-alpha-D-ribose 1-diphosphate + adenine. It participates in purine metabolism; AMP biosynthesis via salvage pathway; AMP from adenine: step 1/1. Its function is as follows. Catalyzes a salvage reaction resulting in the formation of AMP, that is energically less costly than de novo synthesis. In Borreliella burgdorferi (strain ZS7) (Borrelia burgdorferi), this protein is Adenine phosphoribosyltransferase.